A 513-amino-acid polypeptide reads, in one-letter code: MTHVINLDGEHLTLEDVIAVARHGATCEIDQEAKKAVEASRKIVDDIVREKRVVYGVTTGFGSLCNVSISPEDTTQLQENLIRTHSSGYGDPLPEDAVRAIMLIRINSLVKGYSGIRLSTVEKLLELLNKGVVPYIPEKGSLGASGDLAPLAHMVLPMLGLGRAYYQGQLLSGQEALDKAGIEKIALAAKEGLALINGTTVLTGIGALATYDAIQLLKLSDVAGALSMEVHNGITSPFEEDLHTIRPQSGQLATARNIRNLLEGSGNTTVATQQRVQDPYTLRCIPQIHGASKDSIAYVKTKVEIEINSVTDNPIITKEGHVISGGNFHGEPMAQPFDFLGIAISEIGNVSERRVERLVNSQLSKLPSFLVKHPGLNSGFMITQYACASLASENKVLSHPASVDSIPSCENQEDFVSMGTTAARKAAEILKNSRRIVATEIMAACQALDLKPENHELGKGTKPAYDLFRQHVRFIEFDKDIEIYEELNKASELIENEEFLAAVEKAVDLSIQF.

The 5-imidazolinone (Ala-Gly) cross-link spans A144–G146. A 2,3-didehydroalanine (Ser) modification is found at S145.

The protein belongs to the PAL/histidase family. In terms of processing, contains an active site 4-methylidene-imidazol-5-one (MIO), which is formed autocatalytically by cyclization and dehydration of residues Ala-Ser-Gly.

It localises to the cytoplasm. The enzyme catalyses L-histidine = trans-urocanate + NH4(+). Its pathway is amino-acid degradation; L-histidine degradation into L-glutamate; N-formimidoyl-L-glutamate from L-histidine: step 1/3. In Streptococcus sanguinis (strain SK36), this protein is Histidine ammonia-lyase.